A 414-amino-acid polypeptide reads, in one-letter code: UPF0754 membrane protein tlr2287 (414 aa).

2 helical membrane-spanning segments follow: residues 2-22 (ADISYWTLLVPPLAGGVIGYF) and 386-406 (AIVRLGGILGFLIGVVQAGVL).

It belongs to the UPF0754 family.

Its subcellular location is the cell inner membrane. This chain is UPF0754 membrane protein tlr2287, found in Thermosynechococcus vestitus (strain NIES-2133 / IAM M-273 / BP-1).